The primary structure comprises 824 residues: Spindle-defective protein 2 (824 aa).

Acidic residues-rich tracts occupy residues Glu16–Asn27 and Gly35–Val44. A disordered region spans residues Glu16–Lys98. A compositionally biased stretch (polar residues) spans Thr59 to Thr70. A compositionally biased stretch (low complexity) spans Ser81–Lys98. A coiled-coil region spans residues Glu111–Leu131. The disordered stretch occupies residues Arg189–Leu252. Residues Asn207–Thr225 are compositionally biased toward polar residues. The stretch at Asn304–Gln324 forms a coiled coil. Disordered stretches follow at residues Lys342–Ser372 and Asn433–Met455. Residues Ser349–Ser366 show a composition bias toward low complexity.

In terms of assembly, interacts with sas-7 (via C-terminus); may be recruited to centrioles by sas-7.

The protein resides in the cytoplasm. The protein localises to the cytoskeleton. Its subcellular location is the microtubule organizing center. It is found in the centrosome. It localises to the centriole. In terms of biological role, required both for centrosome duplication and maturation. Required for pericentriolar material (PCM) recruitment. This Caenorhabditis elegans protein is Spindle-defective protein 2.